The primary structure comprises 701 residues: Glycine--tRNA ligase beta subunit (701 aa).

This sequence belongs to the class-II aminoacyl-tRNA synthetase family. As to quaternary structure, tetramer of two alpha and two beta subunits.

The protein resides in the cytoplasm. The catalysed reaction is tRNA(Gly) + glycine + ATP = glycyl-tRNA(Gly) + AMP + diphosphate. The sequence is that of Glycine--tRNA ligase beta subunit from Thiobacillus denitrificans (strain ATCC 25259 / T1).